Consider the following 922-residue polypeptide: Isoleucine--tRNA ligase (922 aa).

Residues 57-67 (PYANGDIHLGH) carry the 'HIGH' region motif. Residue glutamate 553 coordinates L-isoleucyl-5'-AMP. Residues 594-598 (KMSKS) carry the 'KMSKS' region motif. Position 597 (lysine 597) interacts with ATP. Cysteine 892, cysteine 895, cysteine 912, and cysteine 915 together coordinate Zn(2+).

The protein belongs to the class-I aminoacyl-tRNA synthetase family. IleS type 1 subfamily. Monomer. It depends on Zn(2+) as a cofactor.

The protein localises to the cytoplasm. It catalyses the reaction tRNA(Ile) + L-isoleucine + ATP = L-isoleucyl-tRNA(Ile) + AMP + diphosphate. Its function is as follows. Catalyzes the attachment of isoleucine to tRNA(Ile). As IleRS can inadvertently accommodate and process structurally similar amino acids such as valine, to avoid such errors it has two additional distinct tRNA(Ile)-dependent editing activities. One activity is designated as 'pretransfer' editing and involves the hydrolysis of activated Val-AMP. The other activity is designated 'posttransfer' editing and involves deacylation of mischarged Val-tRNA(Ile). In Desulfitobacterium hafniense (strain DSM 10664 / DCB-2), this protein is Isoleucine--tRNA ligase.